We begin with the raw amino-acid sequence, 124 residues long: Hydrogenase maturation factor HypA (124 aa).

H2 provides a ligand contact to Ni(2+). Zn(2+)-binding residues include C78, C81, C97, and C100.

Belongs to the HypA/HybF family.

Its function is as follows. Involved in the maturation of [NiFe] hydrogenases. Required for nickel insertion into the metal center of the hydrogenase. The chain is Hydrogenase maturation factor HypA from Methanocaldococcus jannaschii (strain ATCC 43067 / DSM 2661 / JAL-1 / JCM 10045 / NBRC 100440) (Methanococcus jannaschii).